We begin with the raw amino-acid sequence, 616 residues long: MSLLQISEPGQTPAPHQRRLAAGIDLGTTHSLVATVRSGQAEALSDSEGRYLLPSVVQYQVDNINVGWQAKQEAEKDPANTISSIKRMLGRSLNDITSRYPNLPYHFHDNDSGLPLIKTPAGIVDPIQVSADILKALAERAIQSLGGELDGVVVTVPAYFDDAQRQGTKEAARRAGLHVLRLLNEPTAAAIAYGLDSGKEGTIVVYDLGGGTFDISVLRLTKGVFEVLATGGDTALGGDDFDMMLADWIRERAGFGYQNDVILQRQLLDIASETKIALSDNDVADININGWKGEITRAEFELLIQPLVKRTLLSVRRALKDADVDVDEVLEVVMVGGSTRVPLVRQMVGDYFKREPLTSIDPDKVVAIGASIQADILVGNKPDSEMLLLDVIPLSLGLETMGGLVEKVIPRNTTIPVARAQEFTTFKDGQTAMSVHVVQGEREMVSDCRSLARFTLRGIPPMAAGGAHIRVTFQVDADGLLSVSAMEKSTGVEASVQVKPSYGLSDTEIANMIQSSMENAKEDLQARRLAEQKVEAARVLESLTAALQEDAHLLTEDEKTAIDNVVDTLIESVEGTDPVAIENAIKQLDKQTQEFAARRMDTSIRQALAGHSVDEI.

Belongs to the heat shock protein 70 family.

Functionally, chaperone involved in the maturation of iron-sulfur cluster-containing proteins. Has a low intrinsic ATPase activity which is markedly stimulated by HscB. Involved in the maturation of IscU. The sequence is that of Chaperone protein HscA from Proteus mirabilis (strain HI4320).